The sequence spans 118 residues: HTH-type transcriptional regulator SarT (118 aa).

A DNA-binding region (H-T-H motif) is located at residues 55–78 (MRDIISYIGIDQSRIVKSVKDLSK).

The protein belongs to the SarA family.

It localises to the cytoplasm. Functionally, transcriptional regulator acting as an intermediary between major regulators sarA and agr and virulence genes. Represses alpha-hemolysin (hla) gene expression. Down-regulates agr RNAIII expression by repressing sarU, a positive activator of agr expression. Up-regulates sarS, which induces the expression of the cell wall-associated protein A (spa). The polypeptide is HTH-type transcriptional regulator SarT (sarT) (Staphylococcus aureus (strain NCTC 8325 / PS 47)).